Consider the following 323-residue polypeptide: tRNA U34 carboxymethyltransferase (323 aa).

Residues K91, W105, K110, G130, 152–154 (DPT), 181–182 (IE), M196, Y200, and R315 each bind carboxy-S-adenosyl-L-methionine.

It belongs to the class I-like SAM-binding methyltransferase superfamily. CmoB family. Homotetramer.

The catalysed reaction is carboxy-S-adenosyl-L-methionine + 5-hydroxyuridine(34) in tRNA = 5-carboxymethoxyuridine(34) in tRNA + S-adenosyl-L-homocysteine + H(+). Its function is as follows. Catalyzes carboxymethyl transfer from carboxy-S-adenosyl-L-methionine (Cx-SAM) to 5-hydroxyuridine (ho5U) to form 5-carboxymethoxyuridine (cmo5U) at position 34 in tRNAs. This chain is tRNA U34 carboxymethyltransferase, found in Shigella boydii serotype 18 (strain CDC 3083-94 / BS512).